Reading from the N-terminus, the 319-residue chain is Ribonucleoside-diphosphate reductase 2 subunit beta (319 aa).

Residues D67, E98, and H101 each contribute to the Fe cation site. The active site involves Y105. E158, E192, and H195 together coordinate Fe cation.

This sequence belongs to the ribonucleoside diphosphate reductase small chain family. As to quaternary structure, tetramer of two alpha and two beta subunits. It depends on Fe cation as a cofactor.

It catalyses the reaction a 2'-deoxyribonucleoside 5'-diphosphate + [thioredoxin]-disulfide + H2O = a ribonucleoside 5'-diphosphate + [thioredoxin]-dithiol. Its function is as follows. Provides the precursors necessary for DNA synthesis. Catalyzes the biosynthesis of deoxyribonucleotides from the corresponding ribonucleotides. R2F contains the tyrosyl radical required for catalysis. This Escherichia coli (strain K12) protein is Ribonucleoside-diphosphate reductase 2 subunit beta (nrdF).